Consider the following 333-residue polypeptide: MRNASVTARLTRSVRAIVKTLLIAIATVTFYFSCDLALPQSAAAYPFWAQQTYPETPREPTGRIVCANCHLAAKPTEVEVPQSVLPDTVFKAVVKIPYDTSAQQVGADGSKVGLNVGAVLMLPEGFKIAPEDRISEELQEEIGDTYFQPYSEDKENIVIVGPLPGEQYQEIVFPVLSPNPATDKNIHFGKYSVHVGGNRGRGQVYPTGEKSNNNLYNASATGTIAKIAKEEDEDGNVKYQVNIQPESGDVVVDTVPAGPELIVSEGQAVKAGDALTNNPNVGGFGQRDAEIVLQDAGRVKGLIAFVALVMLAQVMLVLKKKQVERVQAAEMNF.

The N-terminal stretch at 1 to 44 (MRNASVTARLTRSVRAIVKTLLIAIATVTFYFSCDLALPQSAAA) is a signal peptide. Residues Tyr-45, Cys-66, Cys-69, and His-70 each coordinate heme. Residues 301–318 (GLIAFVALVMLAQVMLVL) traverse the membrane as a helical segment.

Belongs to the cytochrome f family. The 4 large subunits of the cytochrome b6-f complex are cytochrome b6, subunit IV (17 kDa polypeptide, PetD), cytochrome f and the Rieske protein, while the 4 small subunits are PetG, PetL, PetM and PetN. The complex functions as a dimer. Heme serves as cofactor.

It is found in the cellular thylakoid membrane. Functionally, component of the cytochrome b6-f complex, which mediates electron transfer between photosystem II (PSII) and photosystem I (PSI), cyclic electron flow around PSI, and state transitions. This is Cytochrome f (petA) from Desmonostoc sp. (strain PCC 7906) (Nostoc sp. (strain PCC 7906)).